The following is a 617-amino-acid chain: Glutamine--fructose-6-phosphate aminotransferase [isomerizing] (617 aa).

The active-site Nucleophile; for GATase activity is the Cys2. The region spanning 2-222 (CGIIGLAFAE…DGEFGWISPE (221 aa)) is the Glutamine amidotransferase type-2 domain. 2 consecutive SIS domains span residues 293-432 (AAGL…EAGR) and 466-607 (AASL…PDKP). The For Fru-6P isomerization activity role is filled by Lys612.

Homodimer.

The protein localises to the cytoplasm. It carries out the reaction D-fructose 6-phosphate + L-glutamine = D-glucosamine 6-phosphate + L-glutamate. Its function is as follows. Catalyzes the first step in hexosamine metabolism, converting fructose-6P into glucosamine-6P using glutamine as a nitrogen source. This chain is Glutamine--fructose-6-phosphate aminotransferase [isomerizing], found in Aeropyrum pernix (strain ATCC 700893 / DSM 11879 / JCM 9820 / NBRC 100138 / K1).